Here is a 558-residue protein sequence, read N- to C-terminus: Two-component response regulator-like APRR5 (558 aa).

The region spanning 51 to 169 is the Response regulatory domain; that stretch reads RVLLVEADDS…ELRNLWQHVW (119 aa). Positions 180-233 are disordered; that stretch reads FPWNESVGQQKAEGASANNSNGKRDDHVVSGNGGDAQSSCTRPEMEGESADVEV. Positions 240–260 form a coiled coil; that stretch reads QMECAKSQFNETRLLANELQS. Disordered stretches follow at residues 297-319 and 535-558; these read SLRRPNASENQSSGDRPSLHPSS and KKLAEQRPRIKGQFVRQVQSTQAP. A compositionally biased stretch (polar residues) spans 303–319; that stretch reads ASENQSSGDRPSLHPSS. The 43-residue stretch at 509 to 551 folds into the CCT domain; it reads REAALTKFRMKRKDRCYEKKVRYESRKKLAEQRPRIKGQFVRQ.

This sequence belongs to the ARR-like family. In terms of assembly, interacts with ADO1 and ADO2. Interacts with SPY (via N-terminus). Phosphorylation varies throughout the diurnal cycle and enhances ADO1 binding. Post-translationally, O-fucosylated by SPY. O-fucosylation promotes APRR5 proteolysis.

It localises to the nucleus. Transcriptional repressor of CCA1 and LHY, thereby controlling photoperiodic flowering response. Involved in the positive and negative feedback loops of the circadian clock. With RVE8, forms a negative feedback loop of the circadian clock. Expression of several members of the ARR-like family is controlled by circadian rhythm. Proteolytic substrate of the E3 ubiquitin ligase SCF(ADO1) complex. APRR9, APRR7, and APRR5 coordinately act on the upstream region of the target genes to repress their expression from noon until midnight. The particular coordinated sequential expression of APRR9, APRR7, APRR5, APRR3 and APPR1 result to circadian waves that may be at the basis of the endogenous circadian clock. Negative regulator of shade avoidance response. Involved in the inhibition of leaf expansion in shade avoidance response. The sequence is that of Two-component response regulator-like APRR5 (APRR5) from Arabidopsis thaliana (Mouse-ear cress).